Here is a 202-residue protein sequence, read N- to C-terminus: ATP-dependent Clp protease proteolytic subunit (202 aa).

Serine 106 serves as the catalytic Nucleophile. Histidine 131 is a catalytic residue.

Belongs to the peptidase S14 family. As to quaternary structure, fourteen ClpP subunits assemble into 2 heptameric rings which stack back to back to give a disk-like structure with a central cavity, resembling the structure of eukaryotic proteasomes.

It is found in the cytoplasm. The enzyme catalyses Hydrolysis of proteins to small peptides in the presence of ATP and magnesium. alpha-casein is the usual test substrate. In the absence of ATP, only oligopeptides shorter than five residues are hydrolyzed (such as succinyl-Leu-Tyr-|-NHMec, and Leu-Tyr-Leu-|-Tyr-Trp, in which cleavage of the -Tyr-|-Leu- and -Tyr-|-Trp bonds also occurs).. Its function is as follows. Cleaves peptides in various proteins in a process that requires ATP hydrolysis. Has a chymotrypsin-like activity. Plays a major role in the degradation of misfolded proteins. The sequence is that of ATP-dependent Clp protease proteolytic subunit from Albidiferax ferrireducens (strain ATCC BAA-621 / DSM 15236 / T118) (Rhodoferax ferrireducens).